The following is a 715-amino-acid chain: Putative macrophage stimulating 1-like protein (715 aa).

Positions 1 to 20 (MAPAPVTLLAPGAASSMSCS) are cleaved as a signal peptide. The 90-residue stretch at 21–110 (QPGQRSPSND…GRCDLFQEKG (90 aa)) folds into the PAN domain. 4 Kringle domains span residues 63–156 (GRCG…IKSC), 160–238 (ACVW…LPRC), 252–345 (SCFR…IRRC), and 353–464 (DCYH…LRRC). 12 disulfide bridges follow: Cys127/Cys151, Cys161/Cys238, Cys182/Cys221, Cys210/Cys233, Cys253/Cys345, Cys316/Cys339, Cys354/Cys464, Cys375/Cys447, Cys511/Cys527, Cys606/Cys671, Cys636/Cys650, and Cys661/Cys689. One can recognise a Peptidase S1 domain in the interval 488–713 (VAGGHPGNSP…FVDWIHKVMR (226 aa)).

The protein belongs to the peptidase S1 family. Plasminogen subfamily.

It localises to the secreted. The sequence is that of Putative macrophage stimulating 1-like protein (MST1L) from Homo sapiens (Human).